The following is a 271-amino-acid chain: Ribonuclease HII (271 aa).

Residues 84 to 271 (VLIAGVDEVG…HRMSFLSNYI (188 aa)) form the RNase H type-2 domain. A divalent metal cation-binding residues include D90, E91, and D187.

The protein belongs to the RNase HII family. Requires Mn(2+) as cofactor. The cofactor is Mg(2+).

Its subcellular location is the cytoplasm. The enzyme catalyses Endonucleolytic cleavage to 5'-phosphomonoester.. Its function is as follows. Endonuclease that specifically degrades the RNA of RNA-DNA hybrids. This chain is Ribonuclease HII, found in Clostridium tetani (strain Massachusetts / E88).